The primary structure comprises 792 residues: Phenylalanine--tRNA ligase beta subunit (792 aa).

The 109-residue stretch at 39-147 (GESLGQVVVA…DDAPVGQALA (109 aa)) folds into the tRNA-binding domain. The 76-residue stretch at 400–475 (PQPARIRLRR…RIHGYDRVPT (76 aa)) folds into the B5 domain. Residues D453, D459, E462, and E463 each contribute to the Mg(2+) site. Residues 698–791 (SRFPSVRRDL…IEREHRARIR (94 aa)) enclose the FDX-ACB domain.

The protein belongs to the phenylalanyl-tRNA synthetase beta subunit family. Type 1 subfamily. Tetramer of two alpha and two beta subunits. The cofactor is Mg(2+).

The protein localises to the cytoplasm. It carries out the reaction tRNA(Phe) + L-phenylalanine + ATP = L-phenylalanyl-tRNA(Phe) + AMP + diphosphate + H(+). This chain is Phenylalanine--tRNA ligase beta subunit, found in Xanthomonas euvesicatoria pv. vesicatoria (strain 85-10) (Xanthomonas campestris pv. vesicatoria).